Here is a 426-residue protein sequence, read N- to C-terminus: MIRIDLKQDDMPDHWYNILPDLPEELPTPRDETGEAFETLKKAVPTKVLEYEFSGERYPKIPGEIYEKYMQVGRPTPIIRAKNLEEFLGGNIKIYLKMESYTYSGSHKINSALAHVFFAKQDNAKFVSTETGAGQWGSAVALASALFGVDSHIFMVRTSFYAKPYRKYMMYMYGAHPHPSPSEFTEYGKEVLKKNPDTPGSLGLAISEAIHYALDNGGKYIAGSVINSDILFKTIAGMEAKKQMEMAGEDPDYVVGVVGGGSNYAALAFPFLADELQSGKVKRTYIASGSKEVPKMTEGEYRYDYPDTGKVLPLLKMYTIGYDFIPPAVYAGGLRYHAVAPTLSLLMNKGIVQARDYDQEEAFKWARIFSEKEGYIPAPETSHALPILKEIADSNRGEREKKTVLVSFSGHGLLDLGNYAEAMHFE.

Lys108 is modified (N6-(pyridoxal phosphate)lysine).

The protein belongs to the TrpB family. Tetramer of two alpha and two beta chains. Requires pyridoxal 5'-phosphate as cofactor.

The enzyme catalyses (1S,2R)-1-C-(indol-3-yl)glycerol 3-phosphate + L-serine = D-glyceraldehyde 3-phosphate + L-tryptophan + H2O. Its pathway is amino-acid biosynthesis; L-tryptophan biosynthesis; L-tryptophan from chorismate: step 5/5. Functionally, the beta subunit is responsible for the synthesis of L-tryptophan from indole and L-serine. This chain is Tryptophan synthase beta chain (trpB), found in Thermoplasma volcanium (strain ATCC 51530 / DSM 4299 / JCM 9571 / NBRC 15438 / GSS1).